A 1149-amino-acid chain; its full sequence is Bone sialoprotein-binding protein (1149 aa).

The first 52 residues, 1–52 (MINRDNKKAITKKGMISNRLNKFSIRKYTVGTASILVGTTLIFGLGNQEAKA), serve as a signal peptide directing secretion. Positions 53–601 (AENTSTENAK…GDGTVKPEEK (549 aa)) are ligand binding A region. Disordered regions lie at residues 54–249 (ENTS…TAPT) and 675–697 (LPTK…VTVK). A compositionally biased stretch (basic and acidic residues) spans 61–75 (AKQDEASASDNKEVV). Over residues 77-89 (ETENNSTQKNDLT) the composition is skewed to polar residues. Basic and acidic residues predominate over residues 92-106 (IKKETNTDSHQEAKE). The span at 109-126 (TTSSTQQQQNNATTSTET) shows a compositional bias: low complexity. Residues 130-145 (NIEKENVKPSTDKTAT) show a composition bias toward basic and acidic residues. Positions 158–205 (PNNTNNDVTTKPSTSEIQTTPTTPQESTNIENSQPQPTPSKVDNQVTD) are enriched in polar residues. Basic and acidic residues predominate over residues 216–241 (SKEELKNNPEKLKELVRNDSNTDRST). CNA-B domains lie at 602–714 (LYKI…YKEP), 715–824 (KYNL…YKTP), and 825–935 (KYSL…EEDT). Residues 896 to 1124 (TQTGTNTTED…TGSENNGSNN (229 aa)) are disordered. 2 stretches are compositionally biased toward acidic residues: residues 903 to 913 (TEDDKDADGGE) and 930 to 1088 (YFEE…DSDS). Residues 1112–1116 (LPETG) carry the LPXTG sorting signal motif. Position 1115 is a pentaglycyl murein peptidoglycan amidated threonine (Thr1115). The propeptide at 1116–1149 (GSENNGSNNATLFGGLFAALGSLLLFGRRKKQNK) is removed by sortase.

The protein belongs to the serine-aspartate repeat-containing protein (SDr) family.

The protein resides in the secreted. Its subcellular location is the cell wall. Its function is as follows. Specifically interacts with bone sialoprotein (BSP), a glycoprotein of bone and dentin extracellular matrix. Could contribute to staphylococcal osteomyelitis and arthritis. The polypeptide is Bone sialoprotein-binding protein (bbp) (Staphylococcus aureus).